A 171-amino-acid polypeptide reads, in one-letter code: Adenine phosphoribosyltransferase (171 aa).

It belongs to the purine/pyrimidine phosphoribosyltransferase family. As to quaternary structure, homodimer.

It is found in the cytoplasm. It catalyses the reaction AMP + diphosphate = 5-phospho-alpha-D-ribose 1-diphosphate + adenine. It participates in purine metabolism; AMP biosynthesis via salvage pathway; AMP from adenine: step 1/1. Catalyzes a salvage reaction resulting in the formation of AMP, that is energically less costly than de novo synthesis. The polypeptide is Adenine phosphoribosyltransferase (Rhodospirillum centenum (strain ATCC 51521 / SW)).